A 244-amino-acid chain; its full sequence is 1-(5-phosphoribosyl)-5-[(5-phosphoribosylamino)methylideneamino] imidazole-4-carboxamide isomerase (244 aa).

Aspartate 8 functions as the Proton acceptor in the catalytic mechanism. Aspartate 129 functions as the Proton donor in the catalytic mechanism.

It belongs to the HisA/HisF family.

Its subcellular location is the cytoplasm. It carries out the reaction 1-(5-phospho-beta-D-ribosyl)-5-[(5-phospho-beta-D-ribosylamino)methylideneamino]imidazole-4-carboxamide = 5-[(5-phospho-1-deoxy-D-ribulos-1-ylimino)methylamino]-1-(5-phospho-beta-D-ribosyl)imidazole-4-carboxamide. The protein operates within amino-acid biosynthesis; L-histidine biosynthesis; L-histidine from 5-phospho-alpha-D-ribose 1-diphosphate: step 4/9. In Chelativorans sp. (strain BNC1), this protein is 1-(5-phosphoribosyl)-5-[(5-phosphoribosylamino)methylideneamino] imidazole-4-carboxamide isomerase.